The following is a 622-amino-acid chain: MESADSTGKGSIEQSESQRQSQMDRLDREEAFYQFVNNLNEDDYRLMRDNNLLGTPGEITKEELLRRLQQIKEGPPQPSTEETRGDSVSTGGDPAEDSSNGDSIIDWLNSVRQTGNTTRSGQRGNQSWRAVSRTNPNSGDFRFSLEINVNRTSGNPSMPSLDQSAEMPGAEDMEVSSQGEAENEPEPIPIATRSAPAEVTVEEAPIQRGQRRARSRSPDQRRTRARTDRSRSPLHHAVDPPIRRAPHSSSQTVDTSNTEEAEGSSRTRHHVSSQVQNSSSSNETEGSSRTRQHIPARQQVLGTEGQSQSTVHLSNPETRSSSQTPQTDSSTNAETTGTGQRPPTIVLDLQVRRVRPGDYRQRDSIANRTRSRSQTPNNTVTYESERGGFRRTFSRSERAGVRTYVSTIRIPIRRILNTGLSETTSVAIQTMLRQIMTGFGELSYFMYNDNDTDPNNPTAVSPTAAVPGEAQNNANAEVRAPSAEPTEPVAPVETDEGSNVSTTATRREGRNSRGAVTFEESGSLPFLSLAQFFLLNEDDDDQPRGLTKEQIDNLSTRNFGENDALKTCSVCITEYTEGNKLRKLPCSHEYHIHCIDRWLSENSTCPICRRAVLVASNRESIV.

3 disordered regions span residues 1 to 26 (MESA…MDRL), 67 to 386 (RLQQ…ESER), and 473 to 514 (NANA…NSRG). The segment covering 11-21 (SIEQSESQRQS) has biased composition (low complexity). Polar residues-rich tracts occupy residues 110 to 138 (SVRQ…NPNS) and 147 to 163 (INVN…SLDQ). The span at 216–242 (RSPDQRRTRARTDRSRSPLHHAVDPPI) shows a compositional bias: basic and acidic residues. A compositionally biased stretch (polar residues) spans 247–256 (HSSSQTVDTS). A compositionally biased stretch (low complexity) spans 272-289 (SSQVQNSSSSNETEGSSR). Polar residues predominate over residues 300 to 317 (VLGTEGQSQSTVHLSNPE). Positions 318 to 331 (TRSSSQTPQTDSST) are enriched in low complexity. A compositionally biased stretch (polar residues) spans 332 to 341 (NAETTGTGQR). Residues 355–365 (RPGDYRQRDSI) are compositionally biased toward basic and acidic residues. Residues 366–382 (ANRTRSRSQTPNNTVTY) are compositionally biased toward polar residues. Residues 568–609 (CSVCITEYTEGNKLRKLPCSHEYHIHCIDRWLSENSTCPICR) form an RING-type; atypical zinc finger. A PDZ-binding motif is present at residues 619–622 (ESIV).

Belongs to the RNF12 family. In terms of assembly, forms homodimers through the C-terminal region. The N-terminus interacts with the homeobox of LIM/homeobox factor lhx1/lim1, with lhx3/lim3 and lhx5/lim5, and with the N-terminus of ldb1. Shows overlapping expression with lhx1/lim1 and ldb1 in the gastrula mesoderm, and expression overlaps with ldb1 throughout early embryogenesis. After gastrulation, expression is gradually restricted to tissues originated from the ectoderm, the neuroectoderm, neural crest and epidermis, and subsequently to the neural tube as well as the head and tailbud region.

Its subcellular location is the nucleus. The enzyme catalyses S-ubiquitinyl-[E2 ubiquitin-conjugating enzyme]-L-cysteine + [acceptor protein]-L-lysine = [E2 ubiquitin-conjugating enzyme]-L-cysteine + N(6)-ubiquitinyl-[acceptor protein]-L-lysine.. It participates in protein modification; protein ubiquitination. Acts as an E3 ubiquitin-protein ligase specific for ldb1, mediating ubiquitination and proteasome-dependent degradation of excess ldb1 in a RING-dependent manner. Does not degrade ldb1 bound to lhx1/lim1, nor lim1 itself and thus contributes to the establishment of proper ldb1-lhx1/lim1 stoichiometry and the formation of a ldb1-lhx1/lim1 complex. Interferes with Spemann organizer function and suppresses secondary axis formation induced by ldb1 and lhx1/lim1. This chain is E3 ubiquitin-protein ligase RNF12-A (rnf12-a), found in Xenopus laevis (African clawed frog).